Here is a 136-residue protein sequence, read N- to C-terminus: Histone H3.3 (136 aa).

The interval Met-1–Pro-45 is disordered. Lys-5 carries the post-translational modification N6,N6,N6-trimethyllysine; alternate. Lys-5 carries the N6,N6-dimethyllysine; alternate modification. 2 positions are modified to N6-methyllysine; alternate: Lys-5 and Lys-10. Lys-10 carries the post-translational modification N6-acetyllysine; alternate. At Ser-11 the chain carries Phosphoserine. Lys-15 is subject to N6,N6-dimethyllysine; alternate. An N6-acetyllysine; alternate mark is found at Lys-15, Lys-19, Lys-24, Lys-28, and Lys-37. 4 positions are modified to N6-methyllysine; alternate: Lys-19, Lys-24, Lys-28, and Lys-37. A compositionally biased stretch (low complexity) spans Lys-19–Ala-32. Residues Lys-28 and Lys-37 each carry the N6,N6,N6-trimethyllysine; alternate modification. An N6,N6-dimethyllysine; alternate mark is found at Lys-28 and Lys-37. N6-acetyllysine is present on residues Lys-57 and Lys-65. Lys-80 is modified (N6,N6,N6-trimethyllysine; alternate). Position 80 is an N6,N6-dimethyllysine; alternate (Lys-80). At Lys-80 the chain carries N6-methyllysine; alternate. Lys-123 is subject to N6-acetyllysine.

It belongs to the histone H3 family. In terms of assembly, the nucleosome is a histone octamer containing two molecules each of H2A, H2B, H3 and H4 assembled in one H3-H4 heterotetramer and two H2A-H2B heterodimers. The octamer wraps approximately 147 bp of DNA. Post-translationally, phosphorylated by ark1 to form H3S10ph in a cell cycle-dependent manner during mitosis and meiosis. H3S10ph is also formed by ssp2, promotes subsequent H3K14ac formation by gcn5, and is required for transcriptional activation through TBP recruitment to the promoters. Dephosphorylation is performed by sds21. Mono-, di- and trimethylated by the COMPASS complex to form H3K4me1/2/3. H3K4me activates gene expression by regulating transcription elongation and plays a role in telomere length maintenance. H3K4me enrichment correlates with transcription levels, and occurs in a 5' to 3' gradient with H3K4me3 enrichment at the 5'-end of genes, shifting to H3K4me2 and then H3K4me1. Methylated by clr4 to form H3K9me1. H3K9me1 represents a specific tag for epigenetic transcriptional repression by recruiting swi6/HP1 to methylated histones. Targeting to histone probably involves clr3 and rik1. Essential for silencing of centromeres and directional switching of the mating type. Methylated by set2 to form H3K36me. H3K36me represses gene expression. Methylated by dot1 to form H3K79me. H3K79me is required for association of SIR proteins with telomeric regions and for telomeric silencing. The COMPASS-mediated formation of H3K4me2/3 and the dot1-mediated formation of H3K79me require H2BK123ub1. In terms of processing, acetylation of histone H3 leads to transcriptional activation. H3K14ac formation by gcn5 is promoted by H3S10ph. H3K14ac can also be formed by esa1. H3K56ac formation occurs predominantly in newly synthesized H3 molecules during G1, S and G2/M of the cell cycle and may be involved in DNA repair. Acetylation at Lys-123 (H3K122ac) plays a central role in chromatin structure: localizes at the surface of the histone octamer and stimulates transcription, possibly by promoting nucleosome instability.

It is found in the nucleus. The protein resides in the chromosome. Core component of nucleosome. Nucleosomes wrap and compact DNA into chromatin, limiting DNA accessibility to the cellular machineries which require DNA as a template. Histones thereby play a central role in transcription regulation, DNA repair, DNA replication and chromosomal stability. DNA accessibility is regulated via a complex set of post-translational modifications of histones, also called histone code, and nucleosome remodeling. The chain is Histone H3.3 (hht3) from Schizosaccharomyces pombe (strain 972 / ATCC 24843) (Fission yeast).